Consider the following 202-residue polypeptide: ATP-dependent Clp protease proteolytic subunit (202 aa).

Serine 107 functions as the Nucleophile in the catalytic mechanism. Residue histidine 132 is part of the active site.

The protein belongs to the peptidase S14 family. As to quaternary structure, fourteen ClpP subunits assemble into 2 heptameric rings which stack back to back to give a disk-like structure with a central cavity, resembling the structure of eukaryotic proteasomes.

Its subcellular location is the cytoplasm. The enzyme catalyses Hydrolysis of proteins to small peptides in the presence of ATP and magnesium. alpha-casein is the usual test substrate. In the absence of ATP, only oligopeptides shorter than five residues are hydrolyzed (such as succinyl-Leu-Tyr-|-NHMec, and Leu-Tyr-Leu-|-Tyr-Trp, in which cleavage of the -Tyr-|-Leu- and -Tyr-|-Trp bonds also occurs).. Functionally, cleaves peptides in various proteins in a process that requires ATP hydrolysis. Has a chymotrypsin-like activity. Plays a major role in the degradation of misfolded proteins. This Shewanella amazonensis (strain ATCC BAA-1098 / SB2B) protein is ATP-dependent Clp protease proteolytic subunit.